The chain runs to 422 residues: Phytoene synthase 1, chloroplastic (422 aa).

The N-terminal 70 residues, 1–70 (MSSSVAVLWV…NRSRRIGVVS (70 aa)), are a transit peptide targeting the chloroplast.

It belongs to the phytoene/squalene synthase family. As to quaternary structure, monomer. Interacts with OR. Interacts with ORLIKE.

It localises to the plastid. The protein resides in the chloroplast membrane. The enzyme catalyses 2 (2E,6E,10E)-geranylgeranyl diphosphate = 15-cis-phytoene + 2 diphosphate. The protein operates within carotenoid biosynthesis; phytoene biosynthesis; all-trans-phytoene from geranylgeranyl diphosphate: step 1/1. Functionally, catalyzes the reaction from prephytoene diphosphate to phytoene. The sequence is that of Phytoene synthase 1, chloroplastic from Arabidopsis thaliana (Mouse-ear cress).